Here is a 402-residue protein sequence, read N- to C-terminus: 4-hydroxy-3-methylbut-2-enyl diphosphate reductase (402 aa).

Cysteine 66 serves as a coordination point for [4Fe-4S] cluster. A (2E)-4-hydroxy-3-methylbut-2-enyl diphosphate-binding site is contributed by histidine 96. A dimethylallyl diphosphate-binding site is contributed by histidine 96. An isopentenyl diphosphate-binding site is contributed by histidine 96. Cysteine 157 contacts [4Fe-4S] cluster. Histidine 185 is a binding site for (2E)-4-hydroxy-3-methylbut-2-enyl diphosphate. Position 185 (histidine 185) interacts with dimethylallyl diphosphate. An isopentenyl diphosphate-binding site is contributed by histidine 185. The active-site Proton donor is the glutamate 187. Threonine 250 is a (2E)-4-hydroxy-3-methylbut-2-enyl diphosphate binding site. Cysteine 288 contacts [4Fe-4S] cluster. 4 residues coordinate (2E)-4-hydroxy-3-methylbut-2-enyl diphosphate: serine 317, serine 318, asparagine 319, and serine 379. Positions 317, 318, 319, and 379 each coordinate dimethylallyl diphosphate. Isopentenyl diphosphate-binding residues include serine 317, serine 318, asparagine 319, and serine 379.

The protein belongs to the IspH family. Requires [4Fe-4S] cluster as cofactor.

The enzyme catalyses isopentenyl diphosphate + 2 oxidized [2Fe-2S]-[ferredoxin] + H2O = (2E)-4-hydroxy-3-methylbut-2-enyl diphosphate + 2 reduced [2Fe-2S]-[ferredoxin] + 2 H(+). The catalysed reaction is dimethylallyl diphosphate + 2 oxidized [2Fe-2S]-[ferredoxin] + H2O = (2E)-4-hydroxy-3-methylbut-2-enyl diphosphate + 2 reduced [2Fe-2S]-[ferredoxin] + 2 H(+). It participates in isoprenoid biosynthesis; dimethylallyl diphosphate biosynthesis; dimethylallyl diphosphate from (2E)-4-hydroxy-3-methylbutenyl diphosphate: step 1/1. The protein operates within isoprenoid biosynthesis; isopentenyl diphosphate biosynthesis via DXP pathway; isopentenyl diphosphate from 1-deoxy-D-xylulose 5-phosphate: step 6/6. Catalyzes the conversion of 1-hydroxy-2-methyl-2-(E)-butenyl 4-diphosphate (HMBPP) into a mixture of isopentenyl diphosphate (IPP) and dimethylallyl diphosphate (DMAPP). Acts in the terminal step of the DOXP/MEP pathway for isoprenoid precursor biosynthesis. The chain is 4-hydroxy-3-methylbut-2-enyl diphosphate reductase from Thermosynechococcus vestitus (strain NIES-2133 / IAM M-273 / BP-1).